The sequence spans 351 residues: Ion-translocating oxidoreductase complex subunit D (351 aa).

4 helical membrane passes run Ile-18–Gly-38, Gly-40–Leu-60, Leu-87–Ala-107, and Pro-121–Leu-141. Thr-185 is modified (FMN phosphoryl threonine). Helical transmembrane passes span Val-211–Leu-231, Ile-241–Pro-261, Phe-264–Ala-284, Leu-298–Pro-318, and Gly-320–Gln-340.

It belongs to the NqrB/RnfD family. The complex is composed of six subunits: RnfA, RnfB, RnfC, RnfD, RnfE and RnfG. Requires FMN as cofactor.

The protein localises to the cell inner membrane. In terms of biological role, part of a membrane-bound complex that couples electron transfer with translocation of ions across the membrane. This Yersinia pseudotuberculosis serotype O:1b (strain IP 31758) protein is Ion-translocating oxidoreductase complex subunit D.